The sequence spans 139 residues: D-ribose pyranase (139 aa).

His20 (proton donor) is an active-site residue. Residues Asp28, His106, and 128–130 (YAN) each bind substrate.

It belongs to the RbsD / FucU family. RbsD subfamily. As to quaternary structure, homodecamer.

The protein resides in the cytoplasm. It catalyses the reaction beta-D-ribopyranose = beta-D-ribofuranose. It functions in the pathway carbohydrate metabolism; D-ribose degradation; D-ribose 5-phosphate from beta-D-ribopyranose: step 1/2. Functionally, catalyzes the interconversion of beta-pyran and beta-furan forms of D-ribose. The polypeptide is D-ribose pyranase (Histophilus somni (strain 129Pt) (Haemophilus somnus)).